The chain runs to 206 residues: Large ribosomal subunit protein uL4 (206 aa).

Positions 42–94 are disordered; that stretch reads RRQQGSHKAQGRGDVSRTGSKMYKQKGTGRARHHSARAPQFRGGGQAHGPVVR. The segment covering 64 to 77 has biased composition (basic residues); the sequence is YKQKGTGRARHHSA.

This sequence belongs to the universal ribosomal protein uL4 family. In terms of assembly, part of the 50S ribosomal subunit.

Functionally, one of the primary rRNA binding proteins, this protein initially binds near the 5'-end of the 23S rRNA. It is important during the early stages of 50S assembly. It makes multiple contacts with different domains of the 23S rRNA in the assembled 50S subunit and ribosome. In terms of biological role, forms part of the polypeptide exit tunnel. The polypeptide is Large ribosomal subunit protein uL4 (Brucella abortus biovar 1 (strain 9-941)).